A 308-amino-acid chain; its full sequence is MNFERKHIISTKDFSRDEIDFILDRAARLEPFARKGSTVLNGSIVATLFYEPSTRTRLSFDTAVKRLGGTTIGFDSAASSSTVKGETLADTIRIIDSYADAIVLRHPKEGAARMASEISRVPVINAGDGAGHHPTQTLLDLYTMRKECKKAICDLNVAIVGDLKYGRTVHSLAYALSLYGANLSFVSPEQLKMPGSIINYLKRKGLSITETSSLQDVLGRADVIYMTRIQKERFPDPAEYQKVAGTYRITPETLAGVGRDTIVMHPLPRVDEIAPEVDATKHARYFQQSFYGVPVRMAVLSLVMGVDI.

R55 and T56 together coordinate carbamoyl phosphate. Residue K84 participates in L-aspartate binding. Carbamoyl phosphate is bound by residues R105, H133, and Q136. L-aspartate-binding residues include R167 and R228. 2 residues coordinate carbamoyl phosphate: L267 and P268.

This sequence belongs to the aspartate/ornithine carbamoyltransferase superfamily. ATCase family. In terms of assembly, heterooligomer of catalytic and regulatory chains.

It catalyses the reaction carbamoyl phosphate + L-aspartate = N-carbamoyl-L-aspartate + phosphate + H(+). The protein operates within pyrimidine metabolism; UMP biosynthesis via de novo pathway; (S)-dihydroorotate from bicarbonate: step 2/3. Its function is as follows. Catalyzes the condensation of carbamoyl phosphate and aspartate to form carbamoyl aspartate and inorganic phosphate, the committed step in the de novo pyrimidine nucleotide biosynthesis pathway. This chain is Aspartate carbamoyltransferase catalytic subunit, found in Methanocella arvoryzae (strain DSM 22066 / NBRC 105507 / MRE50).